A 250-amino-acid polypeptide reads, in one-letter code: Putative ABC transporter ATP-binding protein YjkB (250 aa).

In terms of domain architecture, ABC transporter spans 13–245; the sequence is ISFRSVRKSY…PQHEAAKEFL (233 aa). 49-56 is a binding site for ATP; sequence GPSGSGKS.

Belongs to the ABC transporter superfamily.

In Bacillus subtilis (strain 168), this protein is Putative ABC transporter ATP-binding protein YjkB (yjkB).